The chain runs to 314 residues: Ferrochelatase (314 aa).

Residues histidine 184 and glutamate 259 each coordinate Fe cation.

The protein belongs to the ferrochelatase family.

The protein resides in the cytoplasm. The catalysed reaction is heme b + 2 H(+) = protoporphyrin IX + Fe(2+). It participates in porphyrin-containing compound metabolism; protoheme biosynthesis; protoheme from protoporphyrin-IX: step 1/1. Catalyzes the ferrous insertion into protoporphyrin IX. The protein is Ferrochelatase of Chlamydia trachomatis serovar L2 (strain ATCC VR-902B / DSM 19102 / 434/Bu).